The primary structure comprises 1235 residues: DNA polymerase catalytic subunit (1235 aa).

Disordered regions lie at residues 640–691 (QGRF…ETAG) and 1098–1134 (AAAPGDEPAPPAALPSPAKRPRETPSPADPPGGASKP). Residues 650-661 (APKRPAAAREDE) show a composition bias toward basic and acidic residues. The span at 662–675 (ERPEEEGEDEDERE) shows a compositional bias: acidic residues. The segment covering 676–691 (EGGGEREPDGARETAG) has biased composition (basic and acidic residues).

The protein belongs to the DNA polymerase type-B family. As to quaternary structure, forms a complex with the ssDNA-binding protein UL29, the DNA polymerase processivity factor, and the alkaline exonuclease. Interacts with the putative helicase-primase complex subunit UL8; this interaction may coordinate leading and lagging strand DNA synthesis at the replication fork.

The protein localises to the host nucleus. The enzyme catalyses DNA(n) + a 2'-deoxyribonucleoside 5'-triphosphate = DNA(n+1) + diphosphate. It catalyses the reaction Endonucleolytic cleavage to 5'-phosphomonoester.. Functionally, replicates viral genomic DNA. The replication complex is composed of six viral proteins: the DNA polymerase, processivity factor, primase, primase-associated factor, helicase, and ssDNA-binding protein. Additionally, the polymerase contains an intrinsic ribonuclease H (RNase H) activity that specifically degrades RNA/DNA heteroduplexes or duplex DNA substrates in the 5' to 3' direction. Therefore, it can catalyze the excision of the RNA primers that initiate the synthesis of Okazaki fragments at a replication fork during viral DNA replication. This is DNA polymerase catalytic subunit from Homo sapiens (Human).